Reading from the N-terminus, the 255-residue chain is Glutamate racemase (255 aa).

Residues aspartate 7–serine 8 and tyrosine 39–glycine 40 each bind substrate. Cysteine 70 serves as the catalytic Proton donor/acceptor. Asparagine 71–threonine 72 contacts substrate. Residue cysteine 181 is the Proton donor/acceptor of the active site. Threonine 182–histidine 183 lines the substrate pocket.

The protein belongs to the aspartate/glutamate racemases family.

It carries out the reaction L-glutamate = D-glutamate. The protein operates within cell wall biogenesis; peptidoglycan biosynthesis. Functionally, provides the (R)-glutamate required for cell wall biosynthesis. The polypeptide is Glutamate racemase (Helicobacter pylori (strain P12)).